The chain runs to 348 residues: MADTFFFTPSRRLTVANVAELTGAKLLNPEFSNIVISTLSSLEGAGEGSLVFVEHRKFSDALLGSSAVAVFCTNEIVFKVPESMAILVTSTPQRDFAQIGRILFPDSVKPMPWFGQREISPYAHIHPSAKFGHDVCIEAGAVIGKNVEIGSGSLISSTAVIGENCRIGRDCYIAPKVTVQYSLIGDRVYLYPGTCIGQDGFGYVGGASGIEKVPQLGRVIIKDGVEIGANTTIDRGTFEDTIIGEGSKIDNLVQIAHNVKIGRYCLIAAQCGIAGSTSIGDMSQLGGSVGVADHIVIGKCVQIAAGSGVMNDIPDGEKWGGSPARPFKQWFREVAALRNIGKVKKEKR.

The active-site Proton acceptor is the histidine 257.

The protein belongs to the transferase hexapeptide repeat family. LpxD subfamily. Homotrimer.

It carries out the reaction a UDP-3-O-[(3R)-3-hydroxyacyl]-alpha-D-glucosamine + a (3R)-hydroxyacyl-[ACP] = a UDP-2-N,3-O-bis[(3R)-3-hydroxyacyl]-alpha-D-glucosamine + holo-[ACP] + H(+). The protein operates within bacterial outer membrane biogenesis; LPS lipid A biosynthesis. Catalyzes the N-acylation of UDP-3-O-acylglucosamine using 3-hydroxyacyl-ACP as the acyl donor. Is involved in the biosynthesis of lipid A, a phosphorylated glycolipid that anchors the lipopolysaccharide to the outer membrane of the cell. The chain is UDP-3-O-acylglucosamine N-acyltransferase from Bartonella quintana (strain Toulouse) (Rochalimaea quintana).